A 241-amino-acid polypeptide reads, in one-letter code: Demethylmenaquinone methyltransferase (241 aa).

S-adenosyl-L-methionine-binding residues include T73 and D92.

Belongs to the class I-like SAM-binding methyltransferase superfamily. MenG/UbiE family.

The catalysed reaction is a 2-demethylmenaquinol + S-adenosyl-L-methionine = a menaquinol + S-adenosyl-L-homocysteine + H(+). The protein operates within quinol/quinone metabolism; menaquinone biosynthesis; menaquinol from 1,4-dihydroxy-2-naphthoate: step 2/2. Methyltransferase required for the conversion of demethylmenaquinol (DMKH2) to menaquinol (MKH2). The chain is Demethylmenaquinone methyltransferase from Chlorobaculum parvum (strain DSM 263 / NCIMB 8327) (Chlorobium vibrioforme subsp. thiosulfatophilum).